A 110-amino-acid chain; its full sequence is Probable ribonuclease HepT (110 aa).

Active-site residues include arginine 75 and histidine 80. The short motif at 75–82 (RDKLIHAY) is the RX(4)HXY motif element. An O-di-AMP-tyrosine modification is found at tyrosine 82.

It belongs to the HepT RNase toxin family. Post-translationally, modified by cognate antitoxin MntA; probably at least 2 successive AMPylation events occur on Tyr-82.

In terms of biological role, toxic component of a type VII toxin-antitoxin (TA) system. Overexpression in E.coli inhibits cell growth. Neutralized by cognate antitoxin MntA. Neutralization is probably due to AMPylation by MntA. Probably an RNAase. This Thermococcus cleftensis (strain DSM 27260 / KACC 17922 / CL1) protein is Probable ribonuclease HepT.